The following is a 249-amino-acid chain: Aspartate/glutamate leucyltransferase (249 aa).

It belongs to the R-transferase family. Bpt subfamily.

The protein resides in the cytoplasm. It carries out the reaction N-terminal L-glutamyl-[protein] + L-leucyl-tRNA(Leu) = N-terminal L-leucyl-L-glutamyl-[protein] + tRNA(Leu) + H(+). The catalysed reaction is N-terminal L-aspartyl-[protein] + L-leucyl-tRNA(Leu) = N-terminal L-leucyl-L-aspartyl-[protein] + tRNA(Leu) + H(+). Its function is as follows. Functions in the N-end rule pathway of protein degradation where it conjugates Leu from its aminoacyl-tRNA to the N-termini of proteins containing an N-terminal aspartate or glutamate. This is Aspartate/glutamate leucyltransferase from Brucella suis (strain ATCC 23445 / NCTC 10510).